The primary structure comprises 266 residues: Diphthine synthase (266 aa).

S-adenosyl-L-methionine-binding positions include L9, D84, V87, 112–113 (SI), L169, A210, and H235.

Belongs to the diphthine synthase family. Homodimer.

The catalysed reaction is 2-[(3S)-amino-3-carboxypropyl]-L-histidyl-[translation elongation factor 2] + 3 S-adenosyl-L-methionine = diphthine-[translation elongation factor 2] + 3 S-adenosyl-L-homocysteine + 3 H(+). Its pathway is protein modification; peptidyl-diphthamide biosynthesis. In terms of biological role, S-adenosyl-L-methionine-dependent methyltransferase that catalyzes the trimethylation of the amino group of the modified target histidine residue in translation elongation factor 2 (EF-2), to form an intermediate called diphthine. The three successive methylation reactions represent the second step of diphthamide biosynthesis. In Methanosarcina mazei (strain ATCC BAA-159 / DSM 3647 / Goe1 / Go1 / JCM 11833 / OCM 88) (Methanosarcina frisia), this protein is Diphthine synthase.